Reading from the N-terminus, the 214-residue chain is Probable septum site-determining protein MinC (214 aa).

Belongs to the MinC family. As to quaternary structure, interacts with MinD and FtsZ.

Cell division inhibitor that blocks the formation of polar Z ring septums. Rapidly oscillates between the poles of the cell to destabilize FtsZ filaments that have formed before they mature into polar Z rings. Prevents FtsZ polymerization. This Thermoanaerobacter pseudethanolicus (strain ATCC 33223 / 39E) (Clostridium thermohydrosulfuricum) protein is Probable septum site-determining protein MinC.